Here is an 86-residue protein sequence, read N- to C-terminus: Antifungal protein 2 (86 aa).

The N-terminal stretch at 1–21 is a signal peptide; that stretch reads MHLSTALFSAIALLAATQVIG. 3 disulfides stabilise this stretch: C43–C57, C45–C74, and C49–C83. Positions 44–54 are lipid-binding; the sequence is NCPNNCKHKKG. Positions 72 to 83 match the Gamma-core motif; the sequence is GKCEWQGGQLNC.

The protein resides in the secreted. Cysteine-rich antifungal protein highly effective against yeasts such as clinically relevant Candida species, including the multidrug-resistant pathogen Candida auris. Does not cause metabolic inactivity and apoptosis induction, but the fungal cell-killing activity is connected to its pore-forming ability in the cell membrane. NFAP2 has a low potential to trigger resistance in C.albicans in vitro, and the developed tolerance to NFAP2 is not associated with severe phenotypic changes compared with development of resistance to generic fluconazole. The polypeptide is Antifungal protein 2 (Neosartorya fischeri (strain ATCC 1020 / DSM 3700 / CBS 544.65 / FGSC A1164 / JCM 1740 / NRRL 181 / WB 181) (Aspergillus fischerianus)).